Consider the following 621-residue polypeptide: Membrane protein insertase YidC (621 aa).

6 helical membrane-spanning segments follow: residues 1 to 21, 363 to 383, 436 to 456, 486 to 506, 527 to 547, and 549 to 569; these read MDKN…GFSI, GWGL…KVLV, MGGC…FFFV, IPLL…TNIL, LMMY…SSGL, and YYYF…RKTT.

This sequence belongs to the OXA1/ALB3/YidC family. Type 1 subfamily. Interacts with the Sec translocase complex via SecD. Specifically interacts with transmembrane segments of nascent integral membrane proteins during membrane integration.

It localises to the cell inner membrane. In terms of biological role, required for the insertion and/or proper folding and/or complex formation of integral membrane proteins into the membrane. Involved in integration of membrane proteins that insert both dependently and independently of the Sec translocase complex, as well as at least some lipoproteins. Aids folding of multispanning membrane proteins. The polypeptide is Membrane protein insertase YidC (Phocaeicola vulgatus (strain ATCC 8482 / DSM 1447 / JCM 5826 / CCUG 4940 / NBRC 14291 / NCTC 11154) (Bacteroides vulgatus)).